The chain runs to 736 residues: MSEHDPAAGLQPLDIDALVEARHPDPFSQLGLHHTDAGPVVRALLPNAAHVSVISRADGALLGELEQLRPGLFAGRITSAAPYRLRIDWHGVVQEIEDTYSFGPVLGDEPLGRLAGGDPYAVLECLGARPMEVDGVPGVRFAVWAPNARRVSVVGDFNAWDGRRHPMRLRHQAGVWELFVPRVGPGTRYKYELLSRDGHPLPLKADPCAMQTEKPPGTASIVAHVDEVEQFPWSDHEWIQSRAGKQTARSPISIYEVHAESWLRVAEEGQRGLDWEELAERMIPYVKSMGFTHVEFMPIAEHPFGGSWGYQPLGQFAPSARFGKPEQFARFVDKAHEAGLGVILDWVPAHFPNDAHGLIDFDGTPLYEHADPREGYHQDWNTMIYNLGRNEVSAFLIASGLAWLKRYHVDGLRVDAVASMLYRDYSRAADQWVPNIYGGRENLESIAFLKRLNHEVGYVPGVPGAITIAEESTAWPGVTARVEDGGLGFQFKWNMGWMHDTLHYMEEDPVYRQYHHHNMTFGMVYAYSERFVLPLSHDEVVHGKGSLLGKMPGDRWQKFANLRAYFGFMWTHPGKKLLFMGGEFGQLAEFNHDASPHWHLLDDSNHHGVQMLVRDLNRLYSDEPALYLLDCEPGGFEWLIGDDSGNSVFAYRRTDGAGRELVVVCNMTPVPRLGYRIGMPRGGRWVEVLNTDAGVYGGSNMGNGGLIHTDSQSSHGWPHSAALTLPPLATIVLRAD.

The Nucleophile role is filled by D415. Catalysis depends on E470, which acts as the Proton donor.

The protein belongs to the glycosyl hydrolase 13 family. GlgB subfamily. In terms of assembly, monomer.

The catalysed reaction is Transfers a segment of a (1-&gt;4)-alpha-D-glucan chain to a primary hydroxy group in a similar glucan chain.. It participates in glycan biosynthesis; glycogen biosynthesis. Catalyzes the formation of the alpha-1,6-glucosidic linkages in glycogen by scission of a 1,4-alpha-linked oligosaccharide from growing alpha-1,4-glucan chains and the subsequent attachment of the oligosaccharide to the alpha-1,6 position. This Paraburkholderia xenovorans (strain LB400) protein is 1,4-alpha-glucan branching enzyme GlgB.